A 150-amino-acid polypeptide reads, in one-letter code: Myosin, essential light chain (150 aa).

EF-hand domains follow at residues 3 to 38 (ASADQIQECFSIFDKDNDGKVSVEDIGACLRSLGKS) and 75 to 110 (EQQKEMLDAFKALDKEGHGTIQGAELRQLLTTLGDY). The Ca(2+) site is built by Asp16, Asp18, Asp20, Lys22, and Asp27.

Myosin is a hexamer of 2 heavy chains and 4 light chains (two regulatory light chains and two essential light chains).

This Dictyostelium discoideum (Social amoeba) protein is Myosin, essential light chain (mlcE).